The primary structure comprises 225 residues: 7-cyano-7-deazaguanine synthase (225 aa).

An ATP-binding site is contributed by 10–20; the sequence is VSGGLDSTTAL. C189, C199, C202, and C205 together coordinate Zn(2+).

Belongs to the QueC family. It depends on Zn(2+) as a cofactor.

It catalyses the reaction 7-carboxy-7-deazaguanine + NH4(+) + ATP = 7-cyano-7-deazaguanine + ADP + phosphate + H2O + H(+). It functions in the pathway purine metabolism; 7-cyano-7-deazaguanine biosynthesis. Functionally, catalyzes the ATP-dependent conversion of 7-carboxy-7-deazaguanine (CDG) to 7-cyano-7-deazaguanine (preQ(0)). The chain is 7-cyano-7-deazaguanine synthase from Saccharophagus degradans (strain 2-40 / ATCC 43961 / DSM 17024).